The primary structure comprises 148 residues: MLDELDKRILYFLQEDGRRSYSEIARILGVPESTVRVRVKKMLKNGIIRKFAALINPFKAGYEIVAVIAVDVEPNKVREVAEKLAELNEVDVLGIATGAHDIFMQVTVKSLRELEEFLLDKLGKIEGIKSTETSILTSVKKWGYARVF.

The region spanning 2 to 63 (LDELDKRILY…LINPFKAGYE (62 aa)) is the HTH asnC-type domain. A DNA-binding region (H-T-H motif) is located at residues 21-40 (YSEIARILGVPESTVRVRVK).

This is an uncharacterized protein from Pyrococcus furiosus (strain ATCC 43587 / DSM 3638 / JCM 8422 / Vc1).